Consider the following 1502-residue polypeptide: Nucleoporin NUP170 (1502 aa).

Residues Met-1 to Glu-31 form a disordered region. A compositionally biased stretch (polar residues) spans Phe-18 to Gln-30. A leucine-zipper region spans residues Leu-233 to Leu-261. Ser-1247 carries the phosphoserine modification.

The protein belongs to the non-repetitive/WGA-negative nucleoporin family. Component of the nuclear pore complex (NPC). NPC constitutes the exclusive means of nucleocytoplasmic transport. NPCs allow the passive diffusion of ions and small molecules and the active, nuclear transport receptor-mediated bidirectional transport of macromolecules such as proteins, RNAs, ribonucleoparticles (RNPs), and ribosomal subunits across the nuclear envelope. Due to its 8-fold rotational symmetry, all subunits are present with 8 copies or multiples thereof. During mitosis NUP53 changes its binding partner within the NPC from NUP170 to NIC96, exposing a high affinity binding site for the karyopherin PSE1, and retaining it in the NPC.

It localises to the nucleus. It is found in the nuclear pore complex. The protein resides in the nucleus membrane. In terms of biological role, functions as a component of the nuclear pore complex (NPC). NPC components, collectively referred to as nucleoporins (NUPs), can play the role of both NPC structural components and of docking or interaction partners for transiently associated nuclear transport factors. NUP170 probably plays an important role in NPC assembly and organization. In addition it is required for chromosome transmission fidelity. This Saccharomyces cerevisiae (strain ATCC 204508 / S288c) (Baker's yeast) protein is Nucleoporin NUP170 (NUP170).